The sequence spans 505 residues: AMP phosphorylase (505 aa).

AMP contacts are provided by residues G170, 196-201 (SRAITS), and T205. D258 serves as the catalytic Proton donor. AMP contacts are provided by S266 and K290.

Belongs to the thymidine/pyrimidine-nucleoside phosphorylase family. Type 2 subfamily.

The catalysed reaction is AMP + phosphate = alpha-D-ribose 1,5-bisphosphate + adenine. It catalyses the reaction CMP + phosphate = cytosine + alpha-D-ribose 1,5-bisphosphate. It carries out the reaction UMP + phosphate = alpha-D-ribose 1,5-bisphosphate + uracil. In terms of biological role, catalyzes the conversion of AMP and phosphate to adenine and ribose 1,5-bisphosphate (R15P). Exhibits phosphorylase activity toward CMP and UMP in addition to AMP. Functions in an archaeal AMP degradation pathway, together with R15P isomerase and RubisCO. This is AMP phosphorylase from Methanococcus maripaludis (strain DSM 14266 / JCM 13030 / NBRC 101832 / S2 / LL).